The sequence spans 31 residues: U14-ctenitoxin-Co1c (31 aa).

Expressed by the venom gland.

It is found in the secreted. Functionally, not toxic to mice by intracerebroventricular injection. The chain is U14-ctenitoxin-Co1c from Ctenus ornatus (Brazilian spider).